Here is a 223-residue protein sequence, read N- to C-terminus: Small ribosomal subunit protein uS3 (223 aa).

A KH type-2 domain is found at 39–107 (IRQFLRKKPS…EVWLEIAEIK (69 aa)).

Belongs to the universal ribosomal protein uS3 family. In terms of assembly, part of the 30S ribosomal subunit. Forms a tight complex with proteins S10 and S14.

In terms of biological role, binds the lower part of the 30S subunit head. Binds mRNA in the 70S ribosome, positioning it for translation. This Chlamydia pneumoniae (Chlamydophila pneumoniae) protein is Small ribosomal subunit protein uS3.